A 113-amino-acid chain; its full sequence is UPF0102 protein Mfla_2283 (113 aa).

It belongs to the UPF0102 family.

In Methylobacillus flagellatus (strain ATCC 51484 / DSM 6875 / VKM B-1610 / KT), this protein is UPF0102 protein Mfla_2283.